We begin with the raw amino-acid sequence, 451 residues long: Subtilase-type proteinase psp3 (451 aa).

A signal peptide spans 1–20; sequence MRVSWISGLLLVAHLAPSSA. The 82-residue stretch at 80 to 161 folds into the Inhibitor I9 domain; that stretch reads YIVMFKPSVD…LVEPDRVMHV (82 aa). The Peptidase S8 domain occupies 169 to 451; sequence PWGLARVSHR…PNVLAFNNYE (283 aa). Catalysis depends on charge relay system residues D205, H237, and S394.

It belongs to the peptidase S8 family.

In Schizosaccharomyces pombe (strain 972 / ATCC 24843) (Fission yeast), this protein is Subtilase-type proteinase psp3 (psp3).